A 319-amino-acid polypeptide reads, in one-letter code: Acetyl-coenzyme A carboxylase carboxyl transferase subunit alpha (319 aa).

A CoA carboxyltransferase C-terminal domain is found at 38 to 293 (HALQDKLRMR…KAVLLNELDA (256 aa)).

Belongs to the AccA family. In terms of assembly, acetyl-CoA carboxylase is a heterohexamer composed of biotin carboxyl carrier protein (AccB), biotin carboxylase (AccC) and two subunits each of ACCase subunit alpha (AccA) and ACCase subunit beta (AccD).

It is found in the cytoplasm. It catalyses the reaction N(6)-carboxybiotinyl-L-lysyl-[protein] + acetyl-CoA = N(6)-biotinyl-L-lysyl-[protein] + malonyl-CoA. The protein operates within lipid metabolism; malonyl-CoA biosynthesis; malonyl-CoA from acetyl-CoA: step 1/1. Component of the acetyl coenzyme A carboxylase (ACC) complex. First, biotin carboxylase catalyzes the carboxylation of biotin on its carrier protein (BCCP) and then the CO(2) group is transferred by the carboxyltransferase to acetyl-CoA to form malonyl-CoA. The sequence is that of Acetyl-coenzyme A carboxylase carboxyl transferase subunit alpha from Stenotrophomonas maltophilia (strain K279a).